A 290-amino-acid chain; its full sequence is Shikimate dehydrogenase (NADP(+)) (290 aa).

Residues 24 to 26 (SKS) and threonine 71 contribute to the shikimate site. Lysine 75 serves as the catalytic Proton acceptor. The shikimate site is built by asparagine 96 and aspartate 111. NADP(+)-binding positions include 135 to 139 (GAGGA), 159 to 164 (NRTKQR), and isoleucine 228. Tyrosine 230 serves as a coordination point for shikimate. Position 251 (glycine 251) interacts with NADP(+).

The protein belongs to the shikimate dehydrogenase family. Homodimer.

It carries out the reaction shikimate + NADP(+) = 3-dehydroshikimate + NADPH + H(+). Its pathway is metabolic intermediate biosynthesis; chorismate biosynthesis; chorismate from D-erythrose 4-phosphate and phosphoenolpyruvate: step 4/7. Involved in the biosynthesis of the chorismate, which leads to the biosynthesis of aromatic amino acids. Catalyzes the reversible NADPH linked reduction of 3-dehydroshikimate (DHSA) to yield shikimate (SA). The sequence is that of Shikimate dehydrogenase (NADP(+)) from Bartonella tribocorum (strain CIP 105476 / IBS 506).